A 205-amino-acid chain; its full sequence is High frequency lysogenization protein HflD homolog (205 aa).

The protein belongs to the HflD family.

It is found in the cytoplasm. The protein localises to the cell inner membrane. This chain is High frequency lysogenization protein HflD homolog, found in Haemophilus influenzae (strain ATCC 51907 / DSM 11121 / KW20 / Rd).